Here is a 206-residue protein sequence, read N- to C-terminus: 2,3-bisphosphoglycerate-dependent phosphoglycerate mutase (206 aa).

Substrate-binding positions include 9–16 (RHGQSEWN), 22–23 (TG), arginine 61, 88–91 (ERDY), lysine 99, 115–116 (RR), and 159–160 (GN). The Tele-phosphohistidine intermediate role is filled by histidine 10. Residue glutamate 88 is the Proton donor/acceptor of the active site.

It belongs to the phosphoglycerate mutase family. BPG-dependent PGAM subfamily. Homodimer.

It carries out the reaction (2R)-2-phosphoglycerate = (2R)-3-phosphoglycerate. Its pathway is carbohydrate degradation; glycolysis; pyruvate from D-glyceraldehyde 3-phosphate: step 3/5. In terms of biological role, catalyzes the interconversion of 2-phosphoglycerate and 3-phosphoglycerate. The protein is 2,3-bisphosphoglycerate-dependent phosphoglycerate mutase of Azorhizobium caulinodans (strain ATCC 43989 / DSM 5975 / JCM 20966 / LMG 6465 / NBRC 14845 / NCIMB 13405 / ORS 571).